Reading from the N-terminus, the 540-residue chain is Solute carrier family 2, facilitated glucose transporter member 9 (540 aa).

The interval 1-31 (MARKQNRNSKELGLVPLTDDTSHAGPPGPGR) is disordered. Over 1–51 (MARKQNRNSKELGLVPLTDDTSHAGPPGPGRALLECDHLRSGVPGGRRRKD) the chain is Cytoplasmic. Ser-9 is subject to Phosphoserine. A helical membrane pass occupies residues 52 to 72 (WSCSLLVASLAGAFGSSFLYG). The Extracellular portion of the chain corresponds to 73 to 107 (YNLSVVNAPTPYIKAFYNESWERRHGRPIDPDTLT). An N-linked (GlcNAc...) asparagine glycan is attached at Asn-90. Residues 108 to 128 (LLWSVTVSIFAIGGLVGTLIV) traverse the membrane as a helical segment. Over 129 to 140 (KMIGKVLGRKHT) the chain is Cytoplasmic. The chain crosses the membrane as a helical span at residues 141 to 161 (LLANNGFAISAALLMACSLQA). Residues 162–171 (GAFEMLIVGR) lie on the Extracellular side of the membrane. The chain crosses the membrane as a helical span at residues 172-192 (FIMGIDGGVALSVLPMYLSEI). The Cytoplasmic segment spans residues 193–200 (SPKEIRGS). The chain crosses the membrane as a helical span at residues 201–221 (LGQVTAIFICIGVFTGQLLGL). Residues 222-231 (PELLGKESTW) are Extracellular-facing. Residues 232 to 252 (PYLFGVIVVPAVVQLLSLPFL) traverse the membrane as a helical segment. At 253–316 (PDSPRYLLLE…LLRAPYVRWQ (64 aa)) the chain is on the cytoplasmic side. A helical transmembrane segment spans residues 317–337 (VVTVIVTMACYQLCGLNAIWF). The Extracellular portion of the chain corresponds to 338-354 (YTNSIFGKAGIPPAKIP). The chain crosses the membrane as a helical span at residues 355 to 375 (YVTLSTGGIETLAAVFSGLVI). The Cytoplasmic portion of the chain corresponds to 376 to 381 (EHLGRR). Residues 382–402 (PLLIGGFGLMGLFFGTLTITL) form a helical membrane-spanning segment. The Extracellular segment spans residues 403 to 415 (TLQDHAPWVPYLS). The chain crosses the membrane as a helical span at residues 416–436 (IVGILAIIASFCSGPGGIPFI). The Cytoplasmic portion of the chain corresponds to 437–451 (LTGEFFQQSQRPAAF). A helical transmembrane segment spans residues 452–472 (IIAGTVNWLSNFAVGLLFPFI). The Extracellular segment spans residues 473-478 (QKSLDT). A helical membrane pass occupies residues 479 to 499 (YCFLVFATICITGAIYLYFVL). At 500–540 (PETKNRTYAEISQAFSKRNKAYPPEEKIDSAVTDGKINGRP) the chain is on the cytoplasmic side. Ser-515 carries the post-translational modification Phosphoserine. The segment at 519–540 (KAYPPEEKIDSAVTDGKINGRP) is disordered.

Belongs to the major facilitator superfamily. Sugar transporter (TC 2.A.1.1) family. Glucose transporter subfamily. In terms of tissue distribution, most strongly expressed in basolateral membranes of proximal renal tubular cells, liver and placenta. Also detected in lung, blood leukocytes, heart skeletal muscle and chondrocytes from articular cartilage. Detected in kidney membrane (at protein level). As to expression, only detected in the apical membranes of polarized renal tubular cells and placenta. Detected in kidney membrane (at protein level).

The protein resides in the cell membrane. It is found in the basolateral cell membrane. The protein localises to the apical cell membrane. The enzyme catalyses urate(out) = urate(in). With respect to regulation, extracellular glucose and urate accelerate urate efflux. Intracellular urate, glucose and fructose accelerate urate influx. No effect of extracellular urate, glucose or fructose on urate efflux. Intracellular urate and fructose slightly accelerate urate influx. Functionally, high-capacity urate transporter, which may play a role in the urate reabsorption by proximal tubules. May have a residual high-affinity, low-capacity glucose and fructose transporter activity. Transports urate at rates 45- to 60-fold faster than glucose. Does not transport galactose. May mediate small uptake of adenine but not of other nucleobases. The chain is Solute carrier family 2, facilitated glucose transporter member 9 from Homo sapiens (Human).